Reading from the N-terminus, the 496-residue chain is Beta-amylase (496 aa).

Position 2 is an N-acetylalanine (Ala2). Asp54, His94, and Asp102 together coordinate substrate. Glu187 (proton donor) is an active-site residue. Substrate is bound by residues Lys296, His301, and Thr343. The Proton acceptor role is filled by Glu381. Substrate contacts are provided by residues 382–383 (NA) and Arg421.

It belongs to the glycosyl hydrolase 14 family. Monomer.

The enzyme catalyses Hydrolysis of (1-&gt;4)-alpha-D-glucosidic linkages in polysaccharides so as to remove successive maltose units from the non-reducing ends of the chains.. This Glycine max (Soybean) protein is Beta-amylase (BMY1).